The following is a 379-amino-acid chain: Gonadotropin-releasing hormone II receptor (379 aa).

At 1–40 the chain is on the extracellular side; the sequence is MSAGNGTPWGSAAGEESWAASGVAVEGSELPTFSAAAKVR. Residues 41-60 form a helical membrane-spanning segment; sequence VGVTIVLFVSSAGGNLAVLW. Over 61–76 the chain is Cytoplasmic; it reads SVTRPQPSQLRPSPVR. Residues 77–96 form a helical membrane-spanning segment; it reads TLFAHLAAADLLVTFVVMPL. At 97-114 the chain is on the extracellular side; the sequence is DATWNITVQWLAEDIACR. Asn101 carries an N-linked (GlcNAc...) asparagine glycan. Cys113 and Cys188 form a disulfide bridge. A helical membrane pass occupies residues 115 to 136; the sequence is TLMFLKLMAMYSAAFLPVVIGL. The Cytoplasmic segment spans residues 137 to 160; sequence DRQAAVLNPLGSRSGVRKLLGAAW. The chain crosses the membrane as a helical span at residues 161-178; the sequence is GLSFLLALPQLFLFHTVH. The Extracellular segment spans residues 179–204; the sequence is RAGPVPFTQCVTKGSFKARWQETTYN. The helical transmembrane segment at 205–224 threads the bilayer; the sequence is LFTFRCLFLLPLTAMAICYS. At 225–278 the chain is on the cytoplasmic side; that stretch reads HIVLSVSSPQTRKGSHAPAGEFALCRSFDNCPRVRLWALRLALLILLTFILCWT. A helical transmembrane segment spans residues 279-297; it reads PYYLLGLWYWFSPTMLTEV. Residues 298–303 lie on the Extracellular side of the membrane; sequence PPSLSH. The chain crosses the membrane as a helical span at residues 304-323; it reads ILFLFGLLNAPLDPLLYGAF. The Cytoplasmic segment spans residues 324 to 379; it reads TLGCQRGHQELSIDSSNEGSGRMLQQEIHALRQQEVQKTVTSRSAGETKDISITSI.

This sequence belongs to the G-protein coupled receptor 1 family. Phosphorylated on the C-terminal cytoplasmic tail.

The protein resides in the cell membrane. Functionally, receptor for gonadotropin releasing hormone II (GnRH II). This receptor mediates its action by association with G proteins that activate a phosphatidylinositol-calcium second messenger system. The chain is Gonadotropin-releasing hormone II receptor (GNRHR2) from Macaca mulatta (Rhesus macaque).